Reading from the N-terminus, the 111-residue chain is Universal stress protein B (111 aa).

2 helical membrane-spanning segments follow: residues 1 to 21 (MIST…NMAR) and 90 to 110 (FILT…LLIW).

This sequence belongs to the universal stress protein B family.

The protein resides in the cell inner membrane. This chain is Universal stress protein B, found in Enterobacter sp. (strain 638).